A 395-amino-acid chain; its full sequence is Acetate kinase (395 aa).

Asparagine 8 lines the Mg(2+) pocket. Position 15 (lysine 15) interacts with ATP. Arginine 94 is a binding site for substrate. Catalysis depends on aspartate 151, which acts as the Proton donor/acceptor. Residues 210–214 (HLGNG), 284–286 (DMR), and 329–333 (GIGEN) contribute to the ATP site. Glutamate 382 is a Mg(2+) binding site.

It belongs to the acetokinase family. As to quaternary structure, homodimer. It depends on Mg(2+) as a cofactor. Mn(2+) serves as cofactor.

It is found in the cytoplasm. It carries out the reaction acetate + ATP = acetyl phosphate + ADP. It participates in metabolic intermediate biosynthesis; acetyl-CoA biosynthesis; acetyl-CoA from acetate: step 1/2. Functionally, catalyzes the formation of acetyl phosphate from acetate and ATP. Can also catalyze the reverse reaction. This is Acetate kinase from Protochlamydia amoebophila (strain UWE25).